A 375-amino-acid chain; its full sequence is N-acetylneuraminate epimerase (375 aa).

Residues 1 to 22 (MKLTKTALCTALFATFTFSANA) form the signal peptide. 7 Kelch repeats span residues 43 to 87 (TVYV…AAVD), 89 to 140 (KLYV…ASHG), 142 to 176 (KVYILGGSNLSIFNGFFQDNVAAGEDKGKKDEIVA), 177 to 222 (AYFD…TIQG), 225 to 273 (LVVV…LAGA), 295 to 344 (KQFK…SYNN), and 346 to 375 (VLLIGGETDGGKALTSVKAISYDGKKLTVE). Glutamate 231 acts as the Proton acceptor in catalysis.

This sequence belongs to the NanM family. In terms of assembly, homodimer.

The protein localises to the periplasm. The enzyme catalyses N-acetyl-alpha-neuraminate = N-acetyl-beta-neuraminate. Its function is as follows. Converts alpha-N-acetylneuranimic acid (Neu5Ac) to the beta-anomer, accelerating the equilibrium between the alpha- and beta-anomers. Probably facilitates sialidase-negative bacteria to compete successfully for limited amounts of extracellular Neu5Ac, which is likely taken up in the beta-anomer. In addition, the rapid removal of sialic acid from solution might be advantageous to the bacterium to damp down host responses. The sequence is that of N-acetylneuraminate epimerase from Haemophilus influenzae (strain 86-028NP).